We begin with the raw amino-acid sequence, 264 residues long: Apolipoprotein A-I (264 aa).

The N-terminal stretch at 1–18 (MKAVVLTVAVFFLTGSQA) is a signal peptide. 2 tandem repeats follow at residues 67–88 (LKLLDNWDSLSSTVSKLREQIG) and 89–110 (PVTQEFWDKLEKDTVSLRQEMN). Residues 67-264 (LKLLDNWDSL…DEATKKLTTQ (198 aa)) are 10 X approximate tandem repeats. M109 bears the Methionine sulfoxide mark. A 3; half-length repeat occupies 111 to 121 (KDLEEVKLKVQ). 3 tandem repeats follow at residues 122–143 (PYLDEFQKRWQEDVERYRQQVE), 144–165 (PLGTELREGARQKLQELHEKLS), and 166–187 (PLGQELRDRARAHVDALRTHLA). Residues 188 to 207 (PYSDELRQRLAARLEALKES) form a 7; truncated repeat. Repeat 8 spans residues 208–229 (SSLADYQAKATEHLSALGEKAK). Residues 230-240 (PALEDLRQGLL) form a 9; half-length repeat. Repeat 10 spans residues 241-264 (PVLENLKMSFWSAVDEATKKLTTQ).

This sequence belongs to the apolipoprotein A1/A4/E family. As to quaternary structure, homodimer. Interacts with APOA1BP and CLU. Component of a sperm activating protein complex (SPAP), consisting of APOA1, an immunoglobulin heavy chain, an immunoglobulin light chain and albumin. Interacts with NDRG1. Interacts with SCGB3A2. Interacts with NAXE and YJEFN3. Post-translationally, glycosylated. In terms of processing, palmitoylated. Phosphorylation sites are present in the extracellular medium.

It is found in the secreted. In terms of biological role, participates in the reverse transport of cholesterol from tissues to the liver for excretion by promoting cholesterol efflux from tissues and by acting as a cofactor for the lecithin cholesterol acyltransferase (LCAT). As part of the SPAP complex, activates spermatozoa motility. This is Apolipoprotein A-I (ApoA1) from Marmota monax (Woodchuck).